A 549-amino-acid chain; its full sequence is NAC domain-containing protein 53 (549 aa).

The 151-residue stretch at 9-159 (LAPGFRFHPT…AFVLCRIFQK (151 aa)) folds into the NAC domain. The DNA-binding element occupies 108–165 (VGMKKTLVYHKGRAPRGERTNWVMHEYRLVDQDLDKTGVHQDAFVLCRIFQKSGSGPK). Positions 395-416 (LEKEETSRSKHVVEEKEKDEAS) are enriched in basic and acidic residues. The segment at 395–418 (LEKEETSRSKHVVEEKEKDEASCS) is disordered. The helical transmembrane segment at 526-546 (LIFMCFWVLLLSVSFKVSILV) threads the bilayer.

Expressed in roots, rosette leaves, cauline leaves, shoot apex and stems.

Its subcellular location is the endoplasmic reticulum membrane. The protein localises to the nucleus. Functionally, transcriptional activator activated by proteolytic cleavage through regulated intramembrane proteolysis (RIP). Promotes reactive oxygen species (ROS) production during drought-induced leaf senescence. In response to abscisic acid (ABA)-mediated drought stress signals, binds directly to the promoters of RBOHC and RBOHE genes, encoding ROS biosynthetic enzymes, resulting in ROS accumulation and triggering leaf senescence via programmed cell death (PCD). ROS-induced leaf senescence sustains plant survival under drought conditions. Involved in heat stress response. Modulates PCD through a ROS-mediated positive feedback control under heat stress conditions. This may provide an adaptation strategy for plant survival under extreme heat stress conditions. Acts as a repressor in preventing anther dehiscence during stamen development by suppressing genes that participate in jasmonic acid (JA) biosynthesis, such as DAD1, AOS, AOC3, OPR3 and 4CLL5/OPCL1. The chain is NAC domain-containing protein 53 from Arabidopsis thaliana (Mouse-ear cress).